Reading from the N-terminus, the 820-residue chain is Probable ATP-dependent RNA helicase DDX23 (820 aa).

Residues 1–42 are compositionally biased toward basic and acidic residues; it reads MAGELADKKDRDASPSKEERKRSRTPDRERDRDRDRKSSPSK. The disordered stretch occupies residues 1-244; sequence MAGELADKKD…QKIREEKDKS (244 aa). Phosphoserine occurs at positions 14 and 16. A compositionally biased stretch (basic residues) spans 43–65; sequence DRKRHRSRDRRRGGSRSRSRSRS. A compositionally biased stretch (basic and acidic residues) spans 66–105; sequence KSAERERRHKERERDKERDRNKKDRDRDKDGHRRDKDRKR. Phosphoserine occurs at positions 107 and 109. Basic and acidic residues-rich tracts occupy residues 112-137, 147-226, and 233-244; these read RGKD…DKKP, LLAK…RETN, and GRQKIREEKDKS. The Q motif signature appears at 391-419; it reads RSWKDSSLPPHILEVIDKCGYKEPTPIQR. Residues 422-627 form the Helicase ATP-binding domain; it reads IPIGLQNRDI…RSYLRRPAVV (206 aa). 435-442 provides a ligand contact to ATP; the sequence is AETGSGKT. Residues 549–552 carry the DEAD box motif; sequence DEAD. The region spanning 651-799 is the Helicase C-terminal domain; the sequence is KRKKLLAILE…SCPPELANHP (149 aa). Glycyl lysine isopeptide (Lys-Gly) (interchain with G-Cter in SUMO2) cross-links involve residues Lys-686 and Lys-811.

The protein belongs to the DEAD box helicase family. DDX23/PRP28 subfamily. In terms of assembly, the phosphorylated form (by SRPK2) is a component of the U4/U6-U5 tri-snRNP complex composed of the U4, U6 and U5 snRNAs and at least PRPF3, PRPF4, PRPF6, PRPF8, PRPF31, SNRNP200, TXNL4A, WDR57, SNRNP40, DDX23, CD2BP2, PPIH, SNU13, EFTUD2, SART1 and USP39. Identified in the spliceosome C complex. Interacts with ERBB4. Interacts with ERCC6. In terms of processing, in vitro phosphorylated by CLK1 and U1 snRNP-associated protein kinase. Phosphorylated by SRPK2 and this phosphorylation is required for its association with the tri-snRNP (U4/U6-U5 tri-small nuclear ribonucleoproteins) and subsequent spliceosomal B complex formation. May be phosphorylated by SRPK2 on Ser residues in the SR domain; the phosphorylation is required for the removal of inappropriate R-loops during transcription.

The protein resides in the nucleus. The protein localises to the chromosome. It carries out the reaction ATP + H2O = ADP + phosphate + H(+). In terms of biological role, involved in pre-mRNA splicing and its phosphorylated form (by SRPK2) is required for spliceosomal B complex formation. Independently of its spliceosome formation function, required for the suppression of incorrect R-loops formed during transcription; R-loops are composed of a DNA:RNA hybrid and the associated non-template single-stranded DNA. The polypeptide is Probable ATP-dependent RNA helicase DDX23 (Homo sapiens (Human)).